The primary structure comprises 262 residues: Small ribosomal subunit protein eS1 (262 aa).

It belongs to the eukaryotic ribosomal protein eS1 family. Component of the small ribosomal subunit. Mature ribosomes consist of a small (40S) and a large (60S) subunit. The 40S subunit contains about 33 different proteins and 1 molecule of RNA (18S). The 60S subunit contains about 49 different proteins and 3 molecules of RNA (25S, 5.8S and 5S).

It is found in the cytoplasm. In Brassica campestris (Field mustard), this protein is Small ribosomal subunit protein eS1.